A 134-amino-acid polypeptide reads, in one-letter code: uncharacterized protein (134 aa).

A disordered region spans residues 59 to 92; it reads VSKPKRRSPHPHGNKAADKRKTTEKEPERKKRVG. The segment covering 61 to 71 has biased composition (basic residues); it reads KPKRRSPHPHG. Residues 73–87 are compositionally biased toward basic and acidic residues; that stretch reads KAADKRKTTEKEPER.

This is an uncharacterized protein from Saccharomyces cerevisiae (strain ATCC 204508 / S288c) (Baker's yeast).